Consider the following 55-residue polypeptide: Sec-independent protein translocase protein TatA (55 aa).

Residues 1–21 (MSLGPWQLFLVLIIILVLFGA) traverse the membrane as a helical segment.

This sequence belongs to the TatA/E family. The Tat system comprises two distinct complexes: a TatABC complex, containing multiple copies of TatA, TatB and TatC subunits, and a separate TatA complex, containing only TatA subunits. Substrates initially bind to the TatABC complex, which probably triggers association of the separate TatA complex to form the active translocon.

Its subcellular location is the cell membrane. In terms of biological role, part of the twin-arginine translocation (Tat) system that transports large folded proteins containing a characteristic twin-arginine motif in their signal peptide across membranes. TatA could form the protein-conducting channel of the Tat system. This is Sec-independent protein translocase protein TatA from Wolbachia pipientis wMel.